Reading from the N-terminus, the 185-residue chain is Peptidyl-tRNA hydrolase (185 aa).

Tyr14 contacts tRNA. The Proton acceptor role is filled by His19. Positions 64, 66, and 112 each coordinate tRNA.

The protein belongs to the PTH family. Monomer.

The protein localises to the cytoplasm. It catalyses the reaction an N-acyl-L-alpha-aminoacyl-tRNA + H2O = an N-acyl-L-amino acid + a tRNA + H(+). In terms of biological role, hydrolyzes ribosome-free peptidyl-tRNAs (with 1 or more amino acids incorporated), which drop off the ribosome during protein synthesis, or as a result of ribosome stalling. Catalyzes the release of premature peptidyl moieties from peptidyl-tRNA molecules trapped in stalled 50S ribosomal subunits, and thus maintains levels of free tRNAs and 50S ribosomes. The protein is Peptidyl-tRNA hydrolase of Lacticaseibacillus paracasei (strain ATCC 334 / BCRC 17002 / CCUG 31169 / CIP 107868 / KCTC 3260 / NRRL B-441) (Lactobacillus paracasei).